Here is a 391-residue protein sequence, read N- to C-terminus: Putative gustatory receptor 36a (391 aa).

The Cytoplasmic portion of the chain corresponds to 1–3 (MFD). The helical transmembrane segment at 4–24 (WVGLLLKVLYYYGQIIGLINF) threads the bilayer. Residues 25–38 (EIDWQRGRVVAAQR) are Extracellular-facing. A helical transmembrane segment spans residues 39-59 (GILFAIAINVLICMVLLLQIS). Topologically, residues 60–73 (KKFNLDVYFGRANQ) are cytoplasmic. A helical transmembrane segment spans residues 74–94 (LHQYVIIVMVSLRMASGISAI). The Extracellular portion of the chain corresponds to 95–126 (LNRWRQRAQLMRLVECVLRLFLKKPHVKQMSR). The helical transmembrane segment at 127–147 (WAILVKFSVGVVSNFLQMAIS) threads the bilayer. The Cytoplasmic segment spans residues 148-165 (MESLDRLGFNEFVGMASD). The helical transmembrane segment at 166-186 (FWMSAIINMAISQHYLVILFV) threads the bilayer. The Extracellular portion of the chain corresponds to 187 to 247 (RAYYHLLKTE…LQSIVTQLNQ (61 aa)). Residues 248-268 (VFGIQGIMVYGGYYIFSVATT) form a helical membrane-spanning segment. Over 269–290 (YITYSLAINGIEELHLSVRAAA) the chain is Cytoplasmic. The helical transmembrane segment at 291 to 311 (LVFSWFLFYYTSAILNLFVML) threads the bilayer. At 312-391 (KLFDDHKEME…FLIQYDMEYF (80 aa)) the chain is on the extracellular side.

This sequence belongs to the insect chemoreceptor superfamily. Gustatory receptor (GR) family. Gr22e subfamily.

It is found in the cell membrane. Functionally, probable gustatory receptor which mediates acceptance or avoidance behavior, depending on its substrates. In Drosophila melanogaster (Fruit fly), this protein is Putative gustatory receptor 36a (Gr36a).